We begin with the raw amino-acid sequence, 189 residues long: GMP synthase [glutamine-hydrolyzing] subunit A (189 aa).

The Glutamine amidotransferase type-1 domain maps to lysine 5 to tyrosine 189. Cysteine 79 (nucleophile) is an active-site residue. Residues histidine 166 and glutamate 168 contribute to the active site.

As to quaternary structure, heterodimer composed of a glutamine amidotransferase subunit (A) and a GMP-binding subunit (B).

The catalysed reaction is XMP + L-glutamine + ATP + H2O = GMP + L-glutamate + AMP + diphosphate + 2 H(+). It functions in the pathway purine metabolism; GMP biosynthesis; GMP from XMP (L-Gln route): step 1/1. In terms of biological role, catalyzes the synthesis of GMP from XMP. The sequence is that of GMP synthase [glutamine-hydrolyzing] subunit A from Methanococcoides burtonii (strain DSM 6242 / NBRC 107633 / OCM 468 / ACE-M).